The sequence spans 376 residues: UDP-N-acetylglucosamine 2-epimerase (376 aa).

Substrate is bound by residues Arg10, Lys15, Asp95, Glu117, His213, Gln271, Phe276, 290-292 (SGG), Glu296, and Arg313.

The protein belongs to the UDP-N-acetylglucosamine 2-epimerase family. Homodimer.

It localises to the cytoplasm. It carries out the reaction UDP-N-acetyl-alpha-D-glucosamine = UDP-N-acetyl-alpha-D-mannosamine. It functions in the pathway bacterial outer membrane biogenesis; enterobacterial common antigen biosynthesis. Its function is as follows. Catalyzes the reversible epimerization at C-2 of UDP-N-acetylglucosamine (UDP-GlcNAc) and thereby provides bacteria with UDP-N-acetylmannosamine (UDP-ManNAc), the activated donor of ManNAc residues. The sequence is that of UDP-N-acetylglucosamine 2-epimerase from Yersinia pestis.